The following is a 161-amino-acid chain: MIDAEGYRPNVGIILCNPQGEVFWARRIGQDSWQFPQGGIKKDESPEEALFRELKEEVGLPPEAVEIVAGTRGWLRYRLPKKMIRYDSHPVCVGQKQKWFMLQLLADESEICTNYTDKPEFDGWRWVSYWYPLGQVVSFKREVYRRAMREFAPVLFKREES.

A Nudix hydrolase domain is found at 6 to 149; it reads GYRPNVGIIL…KREVYRRAMR (144 aa). The Nudix box signature appears at 38 to 59; the sequence is GGIKKDESPEEALFRELKEEVG.

The protein belongs to the Nudix hydrolase family. RppH subfamily. A divalent metal cation is required as a cofactor.

In terms of biological role, accelerates the degradation of transcripts by removing pyrophosphate from the 5'-end of triphosphorylated RNA, leading to a more labile monophosphorylated state that can stimulate subsequent ribonuclease cleavage. This Hahella chejuensis (strain KCTC 2396) protein is RNA pyrophosphohydrolase.